The sequence spans 558 residues: CTP synthase (558 aa).

The segment at 1 to 270 (MTKYVFVTGG…DDLICRELDL (270 aa)) is amidoligase domain. Ser-13 serves as a coordination point for CTP. Ser-13 provides a ligand contact to UTP. ATP-binding positions include 14 to 19 (SLGKGI) and Asp-71. Mg(2+) is bound by residues Asp-71 and Glu-144. CTP is bound by residues 151–153 (DIE), 191–196 (KTKPTQ), and Lys-227. UTP-binding positions include 191–196 (KTKPTQ) and Lys-227. One can recognise a Glutamine amidotransferase type-1 domain in the interval 295 to 547 (TIGMVGKYVE…ISAALEHQKK (253 aa)). Gly-356 contacts L-glutamine. The Nucleophile; for glutamine hydrolysis role is filled by Cys-383. L-glutamine is bound by residues 384 to 387 (LGMQ), Glu-407, and Arg-473. Active-site residues include His-520 and Glu-522.

The protein belongs to the CTP synthase family. In terms of assembly, homotetramer.

It carries out the reaction UTP + L-glutamine + ATP + H2O = CTP + L-glutamate + ADP + phosphate + 2 H(+). The enzyme catalyses L-glutamine + H2O = L-glutamate + NH4(+). It catalyses the reaction UTP + NH4(+) + ATP = CTP + ADP + phosphate + 2 H(+). Its pathway is pyrimidine metabolism; CTP biosynthesis via de novo pathway; CTP from UDP: step 2/2. Its activity is regulated as follows. Allosterically activated by GTP, when glutamine is the substrate; GTP has no effect on the reaction when ammonia is the substrate. The allosteric effector GTP functions by stabilizing the protein conformation that binds the tetrahedral intermediate(s) formed during glutamine hydrolysis. Inhibited by the product CTP, via allosteric rather than competitive inhibition. In terms of biological role, catalyzes the ATP-dependent amination of UTP to CTP with either L-glutamine or ammonia as the source of nitrogen. Regulates intracellular CTP levels through interactions with the four ribonucleotide triphosphates. In Polynucleobacter necessarius subsp. necessarius (strain STIR1), this protein is CTP synthase.